The chain runs to 478 residues: MSATINPVVDNSVFTDCEVADLSLADWGRKEIAIAETEMPGLMALREQYAGKKPLAGARIAGSLHMTIQTAVLIETLVALGAEVRWASCNIFSTQDHAAAAIAARDIPVFAYKGESLKEYWDYAHQIFEWTSDGSHAANMILDDGGDATLLLILGSRAERDPSVIANPSNEEEQVLFASIRSRLTSHPGWYSRNLAGIRGVTEETTTGVHRLYEMEKKGELPFPAINVNDSVTKSKFDNLYGCRESLVDGIKRATDVMIAGKIAVICGYGDVGKGCAQSLRGLGATVWITEIDPICALQAAMEGYRVVTMDDACDKADIFVTATGNLRVITHDHMLKMKNQAIVCNIGHFDSEIDIASVQKYQWENIKPQVDHVIFPTGRRIIVLAQGRLVNLGCATGHPSFVMSSSFTNQVLAQMELWQNGKDYQKKVYVLPKQLDEMVARLHLGKLGVKLTELTDEQAHYLNLDKNGPYKPEMYRY.

Residues Thr67, Asp144, and Glu204 each contribute to the substrate site. Thr205–Thr207 contributes to the NAD(+) binding site. The substrate site is built by Lys234 and Asp238. Residues Asn239, Gly268–Gly273, Glu291, Asn326, Ile347–His349, and Asn392 each bind NAD(+).

This sequence belongs to the adenosylhomocysteinase family. The cofactor is NAD(+).

Its subcellular location is the cytoplasm. The catalysed reaction is S-adenosyl-L-homocysteine + H2O = L-homocysteine + adenosine. The protein operates within amino-acid biosynthesis; L-homocysteine biosynthesis; L-homocysteine from S-adenosyl-L-homocysteine: step 1/1. In terms of biological role, may play a key role in the regulation of the intracellular concentration of adenosylhomocysteine. This chain is Adenosylhomocysteinase, found in Nitrosomonas eutropha (strain DSM 101675 / C91 / Nm57).